The following is a 396-amino-acid chain: 1-deoxy-D-xylulose 5-phosphate reductoisomerase (396 aa).

NADPH-binding residues include threonine 13, glycine 14, serine 15, isoleucine 16, and asparagine 127. Residue lysine 128 coordinates 1-deoxy-D-xylulose 5-phosphate. Glutamate 129 serves as a coordination point for NADPH. Aspartate 153 serves as a coordination point for Mn(2+). Serine 154, glutamate 155, serine 184, and histidine 207 together coordinate 1-deoxy-D-xylulose 5-phosphate. A Mn(2+)-binding site is contributed by glutamate 155. Glycine 213 lines the NADPH pocket. Residues serine 220, asparagine 225, lysine 226, and glutamate 229 each coordinate 1-deoxy-D-xylulose 5-phosphate. Glutamate 229 lines the Mn(2+) pocket.

It belongs to the DXR family. Requires Mg(2+) as cofactor. The cofactor is Mn(2+).

It carries out the reaction 2-C-methyl-D-erythritol 4-phosphate + NADP(+) = 1-deoxy-D-xylulose 5-phosphate + NADPH + H(+). It participates in isoprenoid biosynthesis; isopentenyl diphosphate biosynthesis via DXP pathway; isopentenyl diphosphate from 1-deoxy-D-xylulose 5-phosphate: step 1/6. With respect to regulation, inhibited by fosmidomycin and 3-(N-acetyl-N-hydroxyamino)-propylphosphonic acid (FR-900098). Catalyzes the NADPH-dependent rearrangement and reduction of 1-deoxy-D-xylulose-5-phosphate (DXP) to 2-C-methyl-D-erythritol 4-phosphate (MEP). This chain is 1-deoxy-D-xylulose 5-phosphate reductoisomerase, found in Pseudomonas aeruginosa (strain ATCC 15692 / DSM 22644 / CIP 104116 / JCM 14847 / LMG 12228 / 1C / PRS 101 / PAO1).